Here is a 68-residue protein sequence, read N- to C-terminus: Conotoxin ArMMSK-01 (68 aa).

An N-terminal signal peptide occupies residues 1–20 (MMSKLGVLLTICMLLFPLTA). The propeptide occupies 21–51 (LPLDGDQPADRPAERMQDDFISEQHPLFNPI). Disulfide bonds link Cys54-Cys67, Cys55-Cys63, and Cys59-Cys66. 4-hydroxyproline is present on Pro65.

Belongs to the conotoxin M superfamily. In terms of tissue distribution, expressed by the venom duct.

Its subcellular location is the secreted. The sequence is that of Conotoxin ArMMSK-01 from Conus arenatus (Sand-dusted cone).